The sequence spans 411 residues: Alpha-1-antiproteinase (411 aa).

Positions 1–24 (MAPSISRGLLLLAALCCLAPSFLA) are cleaved as a signal peptide. At Ser-33 the chain carries Phosphoserine. N-linked (GlcNAc...) asparagine glycosylation is found at Asn-64, Asn-101, and Asn-265. The interval 367–386 (GATVVEAVPMSLPPQVKFDH) is RCL. A Phosphoserine modification is found at Ser-377.

The protein belongs to the serpin family. As to quaternary structure, interacts with CELA2A. Interacts with ERGIC3 and LMAN1/ERGIC53. Interacts with PRSS1/Trypsin. As to expression, plasma.

It localises to the secreted. Inhibitor of serine proteases. The primary target is elastase, but also has a moderate affinity for plasmin and thrombin. This Rattus norvegicus (Rat) protein is Alpha-1-antiproteinase (Serpina1).